A 273-amino-acid polypeptide reads, in one-letter code: Phycobilisome 32.1 kDa linker polypeptide, phycocyanin-associated, rod 2 (273 aa).

The PBS-linker domain occupies 1-180 (MTSLVSAQRL…VYRGYATSDR (180 aa)). The CpcD-like domain maps to 220-273 (NQMYRLQVIQGAAPGRGTRVRRGKAEYLVSYDNLSAKLQQINRQGDTVTMISLA).

This sequence belongs to the phycobilisome linker protein family. In terms of assembly, part of 2 PBS rod complexes, the conventional CpcG-PBS rod and a photosystem I-specific CpcL-PBS rod, both of which include ferredoxin--NADP reductase (petH). CpcG-PBS has on average 3 stacked phycocyanin hexamers (PC, CpcA and CpcB). Linker CpcG connects the PC stack to the thylakoid, the hexamers are linked by 1 copy of CpcC1, 1 copy of CpcC2 and the stack is terminated by a single copy of CpcD. The CpcL-PBS has on average 5 stacked phycocyanin hexamers (PC, CpcA and CpcB). Linker CpcL connects the PC stack to the thylakoid, the hexamers are linked by 1 copy of CpcC1, 3 copies of CpcC2 and the stack is terminated by a single copy of CpcD. Interacts with the C-phycocyanin (PC) beta subunit (cpcB), it may fit into the center of the PC hexamer.

The protein resides in the cellular thylakoid membrane. Rod linker protein, associated with phycocyanin. Linker polypeptides determine the state of aggregation and the location of the disk-shaped phycobiliprotein units within the phycobilisome and modulate their spectroscopic properties in order to mediate a directed and optimal energy transfer. The polypeptide is Phycobilisome 32.1 kDa linker polypeptide, phycocyanin-associated, rod 2 (cpcC2) (Synechocystis sp. (strain ATCC 27184 / PCC 6803 / Kazusa)).